The following is a 297-amino-acid chain: uncharacterized protein (297 aa).

E46 is an active-site residue.

This sequence belongs to the PhzF family. Homodimer and homotetramer.

This is an uncharacterized protein from Escherichia coli (strain K12).